Consider the following 161-residue polypeptide: S-ribosylhomocysteine lyase (161 aa).

Residues histidine 53, histidine 57, and cysteine 124 each contribute to the Fe cation site.

Belongs to the LuxS family. As to quaternary structure, homodimer. The cofactor is Fe cation.

The catalysed reaction is S-(5-deoxy-D-ribos-5-yl)-L-homocysteine = (S)-4,5-dihydroxypentane-2,3-dione + L-homocysteine. Its function is as follows. Involved in the synthesis of autoinducer 2 (AI-2) which is secreted by bacteria and is used to communicate both the cell density and the metabolic potential of the environment. The regulation of gene expression in response to changes in cell density is called quorum sensing. Catalyzes the transformation of S-ribosylhomocysteine (RHC) to homocysteine (HC) and 4,5-dihydroxy-2,3-pentadione (DPD). In Phocaeicola vulgatus (strain ATCC 8482 / DSM 1447 / JCM 5826 / CCUG 4940 / NBRC 14291 / NCTC 11154) (Bacteroides vulgatus), this protein is S-ribosylhomocysteine lyase.